The chain runs to 493 residues: E3 ubiquitin-protein ligase Hakai (493 aa).

Disordered stretches follow at residues 1-20 (MDHN…LGGL) and 28-61 (IKLI…GDEE). Positions 7 to 16 (DLQGTNSSAS) are enriched in polar residues. The RING-type zinc-finger motif lies at 109–149 (CDKCGLPIKMYGRMIPCKHVFCYDCAILHEKKGDKMCPGCN). Residues 148–206 (CNEPVQRIEQCVRGSLFMCSIVQGCKRTYLSQRDLQAHINHRHMRAGKPVTRPPLEPVH) are HYB domain. A C2H2-type zinc finger spans residues 164–190 (FMCSIVQGCKRTYLSQRDLQAHINHRH). A disordered region spans residues 253–493 (YNQPHEDIRP…DQARYRPYYQ (241 aa)). Pro residues-rich tracts occupy residues 262–276 (PPPA…PPRP), 342–352 (APPPPPPPPIS), 372–389 (APPP…PPPG), and 399–412 (MNHP…PQHG). The segment covering 427–444 (NPNSLPQFSEDQGTLSPP) has biased composition (polar residues). Over residues 459 to 469 (PRGPPPPPRMQ) the composition is skewed to pro residues. Residues 470–480 (GPPAQAPLAGP) show a composition bias toward low complexity.

The protein belongs to the Hakai family. As to quaternary structure, homodimer. Interacts with tyrosine-phosphorylated SRC substrates. Component of the WMM complex, a N6-methyltransferase complex composed of a catalytic subcomplex, named MAC, and of an associated subcomplex, named MACOM. Component of the MACOM subcomplex.

It is found in the nucleus speckle. Its subcellular location is the nucleus. The protein resides in the nucleoplasm. It catalyses the reaction S-ubiquitinyl-[E2 ubiquitin-conjugating enzyme]-L-cysteine + [acceptor protein]-L-lysine = [E2 ubiquitin-conjugating enzyme]-L-cysteine + N(6)-ubiquitinyl-[acceptor protein]-L-lysine.. It functions in the pathway protein modification; protein ubiquitination. In terms of biological role, E3 ubiquitin-protein ligase that mediates ubiquitination of several tyrosine-phosphorylated Src substrates. Associated component of the WMM complex, a complex that mediates N6-methyladenosine (m6A) methylation of RNAs, a modification that plays a role in the efficiency of mRNA splicing and RNA processing. This is E3 ubiquitin-protein ligase Hakai from Gallus gallus (Chicken).